Consider the following 357-residue polypeptide: GTPase Obg (357 aa).

The region spanning 1-159 (MKFVDEAEIQ…RTLKLELKLL (159 aa)) is the Obg domain. The OBG-type G domain maps to 160–343 (ADIGMLGFPN…IMKSAMTLFE (184 aa)). GTP is bound by residues 166 to 173 (GFPNVGKS), 191 to 195 (FTTLY), 213 to 216 (DVPG), 293 to 296 (NKAD), and 324 to 326 (SAV). Mg(2+)-binding residues include Ser173 and Thr193.

The protein belongs to the TRAFAC class OBG-HflX-like GTPase superfamily. OBG GTPase family. As to quaternary structure, monomer. Mg(2+) is required as a cofactor.

The protein resides in the cytoplasm. Its function is as follows. An essential GTPase which binds GTP, GDP and possibly (p)ppGpp with moderate affinity, with high nucleotide exchange rates and a fairly low GTP hydrolysis rate. Plays a role in control of the cell cycle, stress response, ribosome biogenesis and in those bacteria that undergo differentiation, in morphogenesis control. This chain is GTPase Obg, found in Xylella fastidiosa (strain 9a5c).